We begin with the raw amino-acid sequence, 124 residues long: Fluoride-specific ion channel FluC (124 aa).

Transmembrane regions (helical) follow at residues 6 to 26, 37 to 57, 69 to 89, and 92 to 112; these read LLIG…SGIV, LAVN…SLFA, TGFC…FVLV, and GLLF…LIMV. Na(+) contacts are provided by Gly73 and Thr76.

It belongs to the fluoride channel Fluc/FEX (TC 1.A.43) family.

The protein localises to the cell membrane. The enzyme catalyses fluoride(in) = fluoride(out). With respect to regulation, na(+) is not transported, but it plays an essential structural role and its presence is essential for fluoride channel function. Its function is as follows. Fluoride-specific ion channel. Important for reducing fluoride concentration in the cell, thus reducing its toxicity. This Methanocaldococcus jannaschii (strain ATCC 43067 / DSM 2661 / JAL-1 / JCM 10045 / NBRC 100440) (Methanococcus jannaschii) protein is Fluoride-specific ion channel FluC.